A 128-amino-acid chain; its full sequence is Sulfurtransferase TusD (128 aa).

Cysteine 78 functions as the Cysteine persulfide intermediate in the catalytic mechanism.

The protein belongs to the DsrE/TusD family. Heterohexamer, formed by a dimer of trimers. The hexameric TusBCD complex contains 2 copies each of TusB, TusC and TusD. The TusBCD complex interacts with TusE.

The protein localises to the cytoplasm. In terms of biological role, part of a sulfur-relay system required for 2-thiolation of 5-methylaminomethyl-2-thiouridine (mnm(5)s(2)U) at tRNA wobble positions. Accepts sulfur from TusA and transfers it in turn to TusE. The sequence is that of Sulfurtransferase TusD from Klebsiella pneumoniae (strain 342).